The sequence spans 268 residues: tRNA pseudouridine synthase A (268 aa).

The Nucleophile role is filled by Asp-52. Tyr-110 serves as a coordination point for substrate.

Belongs to the tRNA pseudouridine synthase TruA family. Homodimer.

It catalyses the reaction uridine(38/39/40) in tRNA = pseudouridine(38/39/40) in tRNA. Formation of pseudouridine at positions 38, 39 and 40 in the anticodon stem and loop of transfer RNAs. The protein is tRNA pseudouridine synthase A of Prochlorococcus marinus (strain MIT 9515).